We begin with the raw amino-acid sequence, 157 residues long: Probable Brix domain-containing ribosomal biogenesis protein (157 aa).

The 157-residue stretch at 1 to 157 (MLVTTSRKPS…KFNIKGFKKY (157 aa)) folds into the Brix domain.

In terms of biological role, probably involved in the biogenesis of the ribosome. This chain is Probable Brix domain-containing ribosomal biogenesis protein, found in Methanosarcina mazei (strain ATCC BAA-159 / DSM 3647 / Goe1 / Go1 / JCM 11833 / OCM 88) (Methanosarcina frisia).